The primary structure comprises 323 residues: Methionyl-tRNA formyltransferase (323 aa).

113 to 116 provides a ligand contact to (6S)-5,6,7,8-tetrahydrofolate; the sequence is SLLP.

It belongs to the Fmt family.

It catalyses the reaction L-methionyl-tRNA(fMet) + (6R)-10-formyltetrahydrofolate = N-formyl-L-methionyl-tRNA(fMet) + (6S)-5,6,7,8-tetrahydrofolate + H(+). Its function is as follows. Attaches a formyl group to the free amino group of methionyl-tRNA(fMet). The formyl group appears to play a dual role in the initiator identity of N-formylmethionyl-tRNA by promoting its recognition by IF2 and preventing the misappropriation of this tRNA by the elongation apparatus. The sequence is that of Methionyl-tRNA formyltransferase from Porphyromonas gingivalis (strain ATCC BAA-308 / W83).